The sequence spans 243 residues: 1-(5-phosphoribosyl)-5-[(5-phosphoribosylamino)methylideneamino] imidazole-4-carboxamide isomerase (243 aa).

The active-site Proton acceptor is aspartate 17. Catalysis depends on aspartate 138, which acts as the Proton donor.

This sequence belongs to the HisA/HisF family.

It localises to the cytoplasm. The catalysed reaction is 1-(5-phospho-beta-D-ribosyl)-5-[(5-phospho-beta-D-ribosylamino)methylideneamino]imidazole-4-carboxamide = 5-[(5-phospho-1-deoxy-D-ribulos-1-ylimino)methylamino]-1-(5-phospho-beta-D-ribosyl)imidazole-4-carboxamide. It participates in amino-acid biosynthesis; L-histidine biosynthesis; L-histidine from 5-phospho-alpha-D-ribose 1-diphosphate: step 4/9. The sequence is that of 1-(5-phosphoribosyl)-5-[(5-phosphoribosylamino)methylideneamino] imidazole-4-carboxamide isomerase from Deinococcus geothermalis (strain DSM 11300 / CIP 105573 / AG-3a).